The sequence spans 341 residues: ATPase GET3 (341 aa).

34–41 (KGGVGKTT) lines the ATP pocket. Residue Asp63 is part of the active site. Residues Glu245 and Asn272 each contribute to the ATP site. Zn(2+)-binding residues include Cys283 and Cys286.

Belongs to the arsA ATPase family. As to quaternary structure, homodimer.

The protein localises to the cytoplasm. The protein resides in the endoplasmic reticulum. In terms of biological role, ATPase required for the post-translational delivery of tail-anchored (TA) proteins to the endoplasmic reticulum. Recognizes and selectively binds the transmembrane domain of TA proteins in the cytosol. This complex then targets to the endoplasmic reticulum by membrane-bound receptors, where the tail-anchored protein is released for insertion. This process is regulated by ATP binding and hydrolysis. ATP binding drives the homodimer towards the closed dimer state, facilitating recognition of newly synthesized TA membrane proteins. ATP hydrolysis is required for insertion. Subsequently, the homodimer reverts towards the open dimer state, lowering its affinity for the membrane-bound receptor, and returning it to the cytosol to initiate a new round of targeting. The sequence is that of ATPase GET3 from Paracoccidioides lutzii (strain ATCC MYA-826 / Pb01) (Paracoccidioides brasiliensis).